A 449-amino-acid chain; its full sequence is Phosphoglucosamine mutase (449 aa).

Catalysis depends on Ser100, which acts as the Phosphoserine intermediate. Mg(2+)-binding residues include Ser100, Asp241, Asp243, and Asp245. Position 100 is a phosphoserine (Ser100).

The protein belongs to the phosphohexose mutase family. The cofactor is Mg(2+). Activated by phosphorylation.

It carries out the reaction alpha-D-glucosamine 1-phosphate = D-glucosamine 6-phosphate. Its function is as follows. Catalyzes the conversion of glucosamine-6-phosphate to glucosamine-1-phosphate. In Clostridium botulinum (strain Loch Maree / Type A3), this protein is Phosphoglucosamine mutase.